The following is a 222-amino-acid chain: Ribosomal RNA large subunit methyltransferase E (222 aa).

Over residues 1 to 13 (MSRSDKNPHERLK) the composition is skewed to basic and acidic residues. The interval 1-22 (MSRSDKNPHERLKTAKKRTASS) is disordered. S-adenosyl-L-methionine-binding residues include Gly75, Trp77, Asp94, Asp110, and Asp134. Lys174 functions as the Proton acceptor in the catalytic mechanism.

It belongs to the class I-like SAM-binding methyltransferase superfamily. RNA methyltransferase RlmE family.

It localises to the cytoplasm. It carries out the reaction uridine(2552) in 23S rRNA + S-adenosyl-L-methionine = 2'-O-methyluridine(2552) in 23S rRNA + S-adenosyl-L-homocysteine + H(+). Functionally, specifically methylates the uridine in position 2552 of 23S rRNA at the 2'-O position of the ribose in the fully assembled 50S ribosomal subunit. In Novosphingobium aromaticivorans (strain ATCC 700278 / DSM 12444 / CCUG 56034 / CIP 105152 / NBRC 16084 / F199), this protein is Ribosomal RNA large subunit methyltransferase E.